The following is a 142-amino-acid chain: Hemoglobin subunit alpha (142 aa).

S1 carries the N-acetylserine modification. The Globin domain occupies 1-142 (SLSDKDKAAV…VALALAERYR (142 aa)). H59 provides a ligand contact to O2. H88 lines the heme b pocket.

It belongs to the globin family. As to quaternary structure, heterotetramer of two alpha chains and two beta chains. Red blood cells.

Functionally, involved in oxygen transport from gills to the various peripheral tissues. The protein is Hemoglobin subunit alpha (hba) of Gymnodraco acuticeps (Antarctic dragonfish).